The following is a 473-amino-acid chain: MIHLIKDILTSEPKGQAIDVYGWVRTKRETKNLVFIEINDGSCFASIQATFDRDTGLDNNTEALLKKAGTGVSVKVSGNLVPSPAAGQRVELQANNIHIFGDADQEKYPLQKKRHSMEFLRDIAHLRARTNTFGAVARIRSQMAYAIHTFFQERGFQYVHTPIITGSDCEGAGEMFHVTTFDIEETVKKALKEKKDPDSFKIDYSQDFFGKQANLTVSGQLEGETYATALSRIYTFGPTFRAENSNTSRHLAEFWMVEPEMSFFTIKENMELAEEFIVYLLKWALEKCKEDLEFFDSRIKKGLIEMLKNVVNTPFTRLTYTEAIAELEKHIDRFEFKPYWGCDLQSEHERFLTEEVYKGPVIVTNYPKEIKSFYMKLNEDGKTVRAMDVLVPGLGEIIGGSEREENLDILQGRIKELGLREEDYWWYLDLRRYGTVPHSGFGLGFERLLLYVTGMGNIRDVIPFPRAPKLAEF.

This sequence belongs to the class-II aminoacyl-tRNA synthetase family. In terms of assembly, homodimer.

Its subcellular location is the cytoplasm. The catalysed reaction is tRNA(Asn) + L-asparagine + ATP = L-asparaginyl-tRNA(Asn) + AMP + diphosphate + H(+). The polypeptide is Asparagine--tRNA ligase (Treponema denticola (strain ATCC 35405 / DSM 14222 / CIP 103919 / JCM 8153 / KCTC 15104)).